The sequence spans 134 residues: Cytochrome b5 isoform B (134 aa).

Residues 5–81 enclose the Cytochrome b5 heme-binding domain; sequence AKIFTLSEVS…MEQYYVGEID (77 aa). Heme-binding residues include histidine 40 and histidine 64. Residues 107 to 127 traverse the membrane as a helical segment; that stretch reads FIIKLLQFLVPLAILGLAVGI.

It belongs to the cytochrome b5 family. As to quaternary structure, interacts with CER1, FAH1, FAH2 and BI-1.

It is found in the endoplasmic reticulum membrane. In terms of biological role, membrane bound hemoprotein which function as an electron carrier for several membrane bound oxygenases, including fatty acid desaturases. The chain is Cytochrome b5 isoform B from Arabidopsis thaliana (Mouse-ear cress).